Consider the following 628-residue polypeptide: MNAPDKFTSLLSLTREPFPASHKCLIPGSRPDLNVPVRDVLLTNGETVSLYDTSGPYTDAKVEIDVRRGLPGVRGAWITERNDTESYEGRSHQALDEGLKHAHDHDAQRLAELRAGASALQRTPRRAKAGANVTQMHYARRGIVTPEMEYVALRENGKREWMAEYLANEERAKRVAGNPMGASIPRIITPEFVRDEVARGRAIIPANINHPEVEPMAIGRNFKVKINANIGNSAVTSSIEEEVEKLVWAIRWGADNVMDLSTGKNIHTTRDWIVRNSPVPIGTVPIYQALEKVGGVAEDLTWEIFRDTLIEQAEQGIDYFTIHAGVRLPFIHLTADRMTGIVSRGGSIMAKWCIAHHKESFLYERFEDICDIMKAYDVSFSLGDGLRPGSGADANDEAQFAELRTLGELTQIAWKHDVQTMIEGPGHVPMHMIQANMDEQLKHCHEAPFYTLGPLTIDIAPGYDHISSAIGAAMIGWAGTAMLCYVTPKEHLGLPDRDDVKQGIIAYKIAAHAADVAKGHPGARSRDDALSKARFEFRWQDQFNLGLDPDTAREFHDETLPKDSSKVAHFCSMCGPKFCSMKITQEVREYAAKKGVAEAEAMAEGMAQKSREFMAGGGEIYIPIQPAS.

Residues Asn229, Met258, Tyr287, His323, 343–345, 384–387, and Glu423 each bind substrate; these read SRG and DGLR. Position 427 (His427) interacts with Zn(2+). Tyr450 contacts substrate. Residue His491 coordinates Zn(2+). Cys571, Cys574, and Cys579 together coordinate [4Fe-4S] cluster.

It belongs to the ThiC family. As to quaternary structure, homodimer. [4Fe-4S] cluster is required as a cofactor.

The enzyme catalyses 5-amino-1-(5-phospho-beta-D-ribosyl)imidazole + S-adenosyl-L-methionine = 4-amino-2-methyl-5-(phosphooxymethyl)pyrimidine + CO + 5'-deoxyadenosine + formate + L-methionine + 3 H(+). Its pathway is cofactor biosynthesis; thiamine diphosphate biosynthesis. Functionally, catalyzes the synthesis of the hydroxymethylpyrimidine phosphate (HMP-P) moiety of thiamine from aminoimidazole ribotide (AIR) in a radical S-adenosyl-L-methionine (SAM)-dependent reaction. This is Phosphomethylpyrimidine synthase from Variovorax paradoxus (strain S110).